A 356-amino-acid chain; its full sequence is Adenine deaminase (356 aa).

The Zn(2+) site is built by His-23, His-25, and His-211. Glu-214 (proton donor) is an active-site residue. Asp-292 contacts Zn(2+). Asp-293 serves as a coordination point for substrate.

Belongs to the metallo-dependent hydrolases superfamily. Adenosine and AMP deaminases family. Adenine deaminase type 2 subfamily. Requires Zn(2+) as cofactor.

The protein localises to the cytoplasm. It is found in the nucleus. It carries out the reaction adenine + H2O + H(+) = hypoxanthine + NH4(+). In terms of biological role, catalyzes the hydrolytic deamination of adenine to hypoxanthine. Plays an important role in the purine salvage pathway and in nitrogen catabolism. The polypeptide is Adenine deaminase (Candida albicans (strain SC5314 / ATCC MYA-2876) (Yeast)).